The primary structure comprises 335 residues: Large ribosomal subunit protein uL10 (335 aa).

The disordered stretch occupies residues 300 to 335 (QVSEQAAEKKEEKKEEEKKGPSEEEIGGGLSSLFGG). A compositionally biased stretch (basic and acidic residues) spans 305–321 (AAEKKEEKKEEEKKGPS). Gly residues predominate over residues 326-335 (GGGLSSLFGG).

The protein belongs to the universal ribosomal protein uL10 family. Part of the 50S ribosomal subunit. Forms part of the ribosomal stalk which helps the ribosome interact with GTP-bound translation factors. Forms a heptameric L10(L12)2(L12)2(L12)2 complex, where L10 forms an elongated spine to which the L12 dimers bind in a sequential fashion.

Its function is as follows. Forms part of the ribosomal stalk, playing a central role in the interaction of the ribosome with GTP-bound translation factors. In Sulfolobus acidocaldarius (strain ATCC 33909 / DSM 639 / JCM 8929 / NBRC 15157 / NCIMB 11770), this protein is Large ribosomal subunit protein uL10.